The chain runs to 134 residues: Small ribosomal subunit protein uS8c (134 aa).

The protein belongs to the universal ribosomal protein uS8 family. In terms of assembly, part of the 30S ribosomal subunit.

It localises to the plastid. The protein resides in the chloroplast. One of the primary rRNA binding proteins, it binds directly to 16S rRNA central domain where it helps coordinate assembly of the platform of the 30S subunit. This chain is Small ribosomal subunit protein uS8c (rps8), found in Draba nemorosa (Woodland whitlowgrass).